The sequence spans 88 residues: Small ribosomal subunit protein bS20 (88 aa).

The disordered stretch occupies residues 1–27 (MANSKSAKKRALQSEKRRQHNASRRSM).

The protein belongs to the bacterial ribosomal protein bS20 family.

Its function is as follows. Binds directly to 16S ribosomal RNA. This is Small ribosomal subunit protein bS20 from Shewanella sp. (strain ANA-3).